Consider the following 547-residue polypeptide: Glucose-6-phosphate isomerase 2 (547 aa).

Glu-351 serves as the catalytic Proton donor. Active-site residues include His-382 and Lys-508.

Belongs to the GPI family.

The protein localises to the cytoplasm. It catalyses the reaction alpha-D-glucose 6-phosphate = beta-D-fructose 6-phosphate. It participates in carbohydrate biosynthesis; gluconeogenesis. The protein operates within carbohydrate degradation; glycolysis; D-glyceraldehyde 3-phosphate and glycerone phosphate from D-glucose: step 2/4. In terms of biological role, catalyzes the reversible isomerization of glucose-6-phosphate to fructose-6-phosphate. The protein is Glucose-6-phosphate isomerase 2 of Neisseria meningitidis serogroup A / serotype 4A (strain DSM 15465 / Z2491).